We begin with the raw amino-acid sequence, 238 residues long: Phosphoribosylaminoimidazole-succinocarboxamide synthase (238 aa).

It belongs to the SAICAR synthetase family.

The catalysed reaction is 5-amino-1-(5-phospho-D-ribosyl)imidazole-4-carboxylate + L-aspartate + ATP = (2S)-2-[5-amino-1-(5-phospho-beta-D-ribosyl)imidazole-4-carboxamido]succinate + ADP + phosphate + 2 H(+). It functions in the pathway purine metabolism; IMP biosynthesis via de novo pathway; 5-amino-1-(5-phospho-D-ribosyl)imidazole-4-carboxamide from 5-amino-1-(5-phospho-D-ribosyl)imidazole-4-carboxylate: step 1/2. The protein is Phosphoribosylaminoimidazole-succinocarboxamide synthase of Desulfitobacterium hafniense (strain DSM 10664 / DCB-2).